The following is a 259-amino-acid chain: Global transcriptional regulator CodY (259 aa).

Residues 1-155 (MALLQKTRII…GATVVGMEIL (155 aa)) are GAF domain. Residues 203-222 (ASKIADRVGITRSVIVNALR) constitute a DNA-binding region (H-T-H motif). The residue at position 215 (serine 215) is a Phosphoserine.

The protein belongs to the CodY family.

It localises to the cytoplasm. In terms of biological role, DNA-binding global transcriptional regulator which is involved in the adaptive response to starvation and acts by directly or indirectly controlling the expression of numerous genes in response to nutrient availability. During rapid exponential growth, CodY is highly active and represses genes whose products allow adaptation to nutrient depletion. This chain is Global transcriptional regulator CodY, found in Bacillus pumilus (strain SAFR-032).